The following is a 429-amino-acid chain: Serine hydroxymethyltransferase (429 aa).

Glycine 120–isoleucine 122 contributes to the (6S)-5,6,7,8-tetrahydrofolate binding site. Position 226 is an N6-(pyridoxal phosphate)lysine (lysine 226).

This sequence belongs to the SHMT family. As to quaternary structure, homodimer. It depends on pyridoxal 5'-phosphate as a cofactor.

It localises to the cytoplasm. It catalyses the reaction 5,10-methylenetetrahydromethanopterin + glycine + H2O = 5,6,7,8-tetrahydromethanopterin + L-serine. It carries out the reaction L-allo-threonine = acetaldehyde + glycine. Its pathway is amino-acid biosynthesis; glycine biosynthesis; glycine from L-serine: step 1/1. In terms of biological role, catalyzes the reversible interconversion of serine and glycine with tetrahydromethanopterin (H4MPT) serving as the one-carbon carrier. The use of tetrahydrofolate (THF or H4PteGlu) as the pteridine substrate is 450-fold less efficient than that of H4MPT. Also exhibits a pteridine-independent aldolase activity toward beta-hydroxyamino acids, producing glycine and aldehydes, via a retro-aldol mechanism. Thus, is able to catalyze the cleavage of L-allo-threonine and L-threo-beta-phenylserine. The protein is Serine hydroxymethyltransferase of Methanocaldococcus jannaschii (strain ATCC 43067 / DSM 2661 / JAL-1 / JCM 10045 / NBRC 100440) (Methanococcus jannaschii).